Consider the following 597-residue polypeptide: Phosphoinositide phosphatase SAC7 (597 aa).

Residues 130-458 (LSVAEKTTGL…GDEISIQYSG (329 aa)) enclose the SAC domain. The Phosphatase catalytic core motif lies at 393-404 (RSNCIDCLDRTN). A run of 2 helical transmembrane segments spans residues 528–548 (AVAN…FATM) and 559–579 (HKHL…AALV).

As to expression, ubiquitous.

The protein localises to the endoplasmic reticulum membrane. Its subcellular location is the cytoplasmic vesicle membrane. In terms of biological role, phosphoinositide phosphatase that preferentially hydrolyzes PtdIns(4)P. Regulates the accumulation of PtdIns(4)P on membrane compartments at the tips of growing root hairs leading to proper root hair development. The protein is Phosphoinositide phosphatase SAC7 (SAC7) of Arabidopsis thaliana (Mouse-ear cress).